The primary structure comprises 290 residues: RIO-type serine/threonine-protein kinase Rio1 (290 aa).

Residues 76-290 (TEYIGIVNSG…PIDEAMIKQL (215 aa)) enclose the Protein kinase domain. ATP is bound by residues 82-90 (VNSGKEAVV) and lysine 103. Aspartate 214 functions as the Proton acceptor in the catalytic mechanism. Residues asparagine 219 and aspartate 231 each contribute to the Mg(2+) site. Aspartate 231 acts as the 4-aspartylphosphate intermediate in catalysis.

Belongs to the protein kinase superfamily. RIO-type Ser/Thr kinase family.

The enzyme catalyses L-seryl-[protein] + ATP = O-phospho-L-seryl-[protein] + ADP + H(+). It carries out the reaction L-threonyl-[protein] + ATP = O-phospho-L-threonyl-[protein] + ADP + H(+). The catalysed reaction is ATP + H2O = ADP + phosphate + H(+). Functionally, despite the protein kinase domain is proposed to act predominantly as an ATPase. The chain is RIO-type serine/threonine-protein kinase Rio1 (rio1) from Methanocaldococcus jannaschii (strain ATCC 43067 / DSM 2661 / JAL-1 / JCM 10045 / NBRC 100440) (Methanococcus jannaschii).